The primary structure comprises 319 residues: HTH-type transcriptional regulator YidZ (319 aa).

Positions Leu-8 to Thr-65 constitute an HTH lysR-type domain. Residues Val-25–Ala-44 constitute a DNA-binding region (H-T-H motif).

Belongs to the LysR transcriptional regulatory family.

Involved in anaerobic NO protection. This is HTH-type transcriptional regulator YidZ from Escherichia coli O157:H7 (strain EC4115 / EHEC).